The primary structure comprises 1183 residues: Translation initiation factor IF-2 (1183 aa).

Disordered regions lie at residues 55–512 (KSKT…KVHI) and 538–574 (ASLA…RQRR). The span at 83-99 (TQKDQKTEPKKKNHDQT) shows a compositional bias: basic and acidic residues. 2 stretches are compositionally biased toward polar residues: residues 100–143 (ELSQ…QITA) and 165–177 (KPLT…IPQS). The span at 220–229 (PKIDIQDKKP) shows a compositional bias: basic and acidic residues. Positions 231 to 252 (QPNNQKAKTRINQGEISPQKVG) are enriched in polar residues. Residues 253–267 (QGNIQKIKSQNKQNQ) are compositionally biased toward low complexity. Residues 288 to 304 (IRREKPVNKPHTNEVRN) are compositionally biased toward basic and acidic residues. 2 stretches are compositionally biased toward polar residues: residues 324-349 (QGLS…NRQG) and 357-367 (NRTTQGQNRPG). The segment covering 485-499 (GRPDWDDSAKLDALR) has biased composition (basic and acidic residues). Basic residues-rich tracts occupy residues 544–553 (SKPKVGKRNN) and 560–574 (LKKR…RQRR). Positions 675–847 (RRPPVVTVMG…VLLVTEVEDL (173 aa)) constitute a tr-type G domain. Positions 684–691 (GHVDHGKT) are G1. Position 684 to 691 (684 to 691 (GHVDHGKT)) interacts with GTP. Residues 709–713 (GITQH) form a G2 region. The segment at 734–737 (DTPG) is G3. Residues 734–738 (DTPGH) and 788–791 (NKID) contribute to the GTP site. The interval 788-791 (NKID) is G4. The interval 824–826 (SAI) is G5.

It belongs to the TRAFAC class translation factor GTPase superfamily. Classic translation factor GTPase family. IF-2 subfamily.

It is found in the cytoplasm. One of the essential components for the initiation of protein synthesis. Protects formylmethionyl-tRNA from spontaneous hydrolysis and promotes its binding to the 30S ribosomal subunits. Also involved in the hydrolysis of GTP during the formation of the 70S ribosomal complex. In Prochlorococcus marinus (strain NATL1A), this protein is Translation initiation factor IF-2.